Reading from the N-terminus, the 447-residue chain is Tubulin beta chain (447 aa).

GTP is bound by residues Q11, E69, S138, G142, T143, G144, N204, and N226. E69 is a Mg(2+) binding site. Positions 427 to 447 (EAHMDDEEAEEAYEDEAPPEE) are disordered. Residues 430–447 (MDDEEAEEAYEDEAPPEE) show a composition bias toward acidic residues.

Belongs to the tubulin family. As to quaternary structure, dimer of alpha and beta chains. A typical microtubule is a hollow water-filled tube with an outer diameter of 25 nm and an inner diameter of 15 nM. Alpha-beta heterodimers associate head-to-tail to form protofilaments running lengthwise along the microtubule wall with the beta-tubulin subunit facing the microtubule plus end conferring a structural polarity. Microtubules usually have 13 protofilaments but different protofilament numbers can be found in some organisms and specialized cells. Mg(2+) is required as a cofactor.

Its subcellular location is the cytoplasm. The protein localises to the cytoskeleton. Its function is as follows. Tubulin is the major constituent of microtubules, a cylinder consisting of laterally associated linear protofilaments composed of alpha- and beta-tubulin heterodimers. Microtubules grow by the addition of GTP-tubulin dimers to the microtubule end, where a stabilizing cap forms. Below the cap, tubulin dimers are in GDP-bound state, owing to GTPase activity of alpha-tubulin. This is Tubulin beta chain (TBB1) from Uromyces fabae (Rust fungus).